The sequence spans 136 residues: ATP synthase epsilon chain, chloroplastic (136 aa).

This sequence belongs to the ATPase epsilon chain family. As to quaternary structure, F-type ATPases have 2 components, CF(1) - the catalytic core - and CF(0) - the membrane proton channel. CF(1) has five subunits: alpha(3), beta(3), gamma(1), delta(1), epsilon(1). CF(0) has three main subunits: a, b and c.

It localises to the plastid. The protein resides in the chloroplast thylakoid membrane. Its function is as follows. Produces ATP from ADP in the presence of a proton gradient across the membrane. The protein is ATP synthase epsilon chain, chloroplastic of Chaetosphaeridium globosum (Charophycean green alga).